The sequence spans 295 residues: Putative nudix hydrolase 7 (295 aa).

Residues 9–182 form the Nudix hydrolase domain; that stretch reads SWRSAASIIL…KYALPPPQVY (174 aa). A Nudix box motif is present at residues 52-73; that stretch reads TDAKLGDEFRIAAVRELFEESG. Positions 67 and 71 each coordinate Mg(2+).

The protein belongs to the Nudix hydrolase family. It depends on Mg(2+) as a cofactor. Requires Mn(2+) as cofactor.

Probably mediates the hydrolysis of some nucleoside diphosphate derivatives. The protein is Putative nudix hydrolase 7 (ndx-7) of Caenorhabditis elegans.